Here is a 395-residue protein sequence, read N- to C-terminus: Phosphoglycerate kinase (395 aa).

Residues 22-24 (DFN), Arg38, 61-64 (HLGR), Arg119, and Arg152 contribute to the substrate site. ATP contacts are provided by residues Lys203, Gly294, Glu325, and 351-354 (GGDT).

It belongs to the phosphoglycerate kinase family. As to quaternary structure, monomer.

The protein resides in the cytoplasm. It carries out the reaction (2R)-3-phosphoglycerate + ATP = (2R)-3-phospho-glyceroyl phosphate + ADP. Its pathway is carbohydrate degradation; glycolysis; pyruvate from D-glyceraldehyde 3-phosphate: step 2/5. The protein is Phosphoglycerate kinase of Hydrogenobaculum sp. (strain Y04AAS1).